Consider the following 313-residue polypeptide: Ribosomal RNA small subunit methyltransferase H (313 aa).

Residues 35–37 (GGH), Asp-55, Phe-79, Asp-101, and Gln-108 contribute to the S-adenosyl-L-methionine site.

It belongs to the methyltransferase superfamily. RsmH family.

It is found in the cytoplasm. It catalyses the reaction cytidine(1402) in 16S rRNA + S-adenosyl-L-methionine = N(4)-methylcytidine(1402) in 16S rRNA + S-adenosyl-L-homocysteine + H(+). Specifically methylates the N4 position of cytidine in position 1402 (C1402) of 16S rRNA. The chain is Ribosomal RNA small subunit methyltransferase H from Shigella flexneri serotype 5b (strain 8401).